We begin with the raw amino-acid sequence, 694 residues long: Polyphosphate kinase (694 aa).

An ATP-binding site is contributed by N45. Residues R367 and R397 each contribute to the Mg(2+) site. H427 (phosphohistidine intermediate) is an active-site residue. Residues Y460, R553, and H580 each coordinate ATP.

It belongs to the polyphosphate kinase 1 (PPK1) family. Mg(2+) serves as cofactor. An intermediate of this reaction is the autophosphorylated ppk in which a phosphate is covalently linked to a histidine residue through a N-P bond.

It catalyses the reaction [phosphate](n) + ATP = [phosphate](n+1) + ADP. Its function is as follows. Catalyzes the reversible transfer of the terminal phosphate of ATP to form a long-chain polyphosphate (polyP). The sequence is that of Polyphosphate kinase from Campylobacter coli.